Reading from the N-terminus, the 377-residue chain is Succinyl-diaminopimelate desuccinylase (377 aa).

A Zn(2+)-binding site is contributed by H66. Residue D68 is part of the active site. D99 contacts Zn(2+). The active-site Proton acceptor is E133. Positions 134, 162, and 348 each coordinate Zn(2+).

The protein belongs to the peptidase M20A family. DapE subfamily. In terms of assembly, homodimer. The cofactor is Zn(2+). Co(2+) serves as cofactor.

It catalyses the reaction N-succinyl-(2S,6S)-2,6-diaminopimelate + H2O = (2S,6S)-2,6-diaminopimelate + succinate. It functions in the pathway amino-acid biosynthesis; L-lysine biosynthesis via DAP pathway; LL-2,6-diaminopimelate from (S)-tetrahydrodipicolinate (succinylase route): step 3/3. Catalyzes the hydrolysis of N-succinyl-L,L-diaminopimelic acid (SDAP), forming succinate and LL-2,6-diaminopimelate (DAP), an intermediate involved in the bacterial biosynthesis of lysine and meso-diaminopimelic acid, an essential component of bacterial cell walls. The sequence is that of Succinyl-diaminopimelate desuccinylase from Alcanivorax borkumensis (strain ATCC 700651 / DSM 11573 / NCIMB 13689 / SK2).